The sequence spans 407 residues: Cell division control protein 12 (407 aa).

Position 2 is an N-acetylserine (Ser2). Residues 31-314 enclose the Septin-type G domain; sequence EGGTFTVMLC…ETYRRLRLEG (284 aa). Residues 41–48 are G1 motif; that stretch reads GESGLGKT. GTP contacts are provided by residues 41–48, Thr75, Gly101, 180–188, Gly247, and Arg263; these read GESGLGKT and KADTLTAQE. The tract at residues 98-101 is G3 motif; the sequence is DTPG. The tract at residues 179–182 is G4 motif; the sequence is AKAD. The stretch at 344 to 406 forms a coiled coil; the sequence is EEENALKKYF…KSLQVKKSHL (63 aa).

This sequence belongs to the TRAFAC class TrmE-Era-EngA-EngB-Septin-like GTPase superfamily. Septin GTPase family. In terms of assembly, component of the septin complex which consists of CDC3, CDC10, CDC11, CDC12 and probably SHS1 and rearranges to a cortical collar of highly ordered filaments at the mother-bud-neck. A complex formed by CDC3, CDC10, CDC11 and CDC12 is capable of forming long filaments in vitro and the components seem to be present in a 2:2:2:2 arrangement in vivo. The filaments are proposed to be formed by the end-to-end polymerization of CDC3-CDC12-CDC11 complexes with CDC10 serving as a bridge to bundle the polymers into paired filaments. Component of the GIN4 complex composed of at least BNI5, CDC3, CDC10, CDC11, CDC12, GIN4, NAP1 and SHS1. Self-associates. Interacts with SYP1.

It is found in the membrane. The protein localises to the bud neck. Functionally, septins are GTPases involved in cytokinesis that assemble early in the cell cycle as a patch at the incipient bud site and form a ring approximate 15 minutes before bud emergence, which transforms into an hour-glass shaped collar of cortical filaments that spans both sides of the mother-bud neck. This collar persists until just before cytokinesis, when it splits into two rings that occupy opposite sides of the neck. The septins at the bud neck serve as a structural scaffold that recruits different components involved in diverse processes at specific stages during the cell cycle. Many proteins bind asymmetrically to the septin collar. The septin assembly is regulated by protein kinases GIN4 and/or CLA4. May act by recruiting MYO1 and HOF1, a protein involved in septation, to the site of cleavage. Septins are also involved in cell morphogenesis, bud site selection, chitin deposition, cell cycle regulation, cell compartmentalization and spore wall formation. In Saccharomyces cerevisiae (strain ATCC 204508 / S288c) (Baker's yeast), this protein is Cell division control protein 12 (CDC12).